The following is a 248-amino-acid chain: Small ribosomal subunit protein uS3 (248 aa).

Residues 39-108 (IRKLVSQKLA…TVAVNVAEIP (70 aa)) enclose the KH type-2 domain. Positions 212-248 (KTETLARPPRKSDERRREDGERPSRRRPTARRRPGGE) are disordered. Residues 221–234 (RKSDERRREDGERP) show a composition bias toward basic and acidic residues. Over residues 235-248 (SRRRPTARRRPGGE) the composition is skewed to basic residues.

The protein belongs to the universal ribosomal protein uS3 family. As to quaternary structure, part of the 30S ribosomal subunit. Forms a tight complex with proteins S10 and S14.

Its function is as follows. Binds the lower part of the 30S subunit head. Binds mRNA in the 70S ribosome, positioning it for translation. The polypeptide is Small ribosomal subunit protein uS3 (Deinococcus geothermalis (strain DSM 11300 / CIP 105573 / AG-3a)).